A 37-amino-acid polypeptide reads, in one-letter code: Peptide encoded by miPEP164a (37 aa).

Functionally, regulatory peptide encoded by the primary transcript (pri-miR164a) of the microRNA miR164a that enhances the accumulation of its corresponding mature miRNA. Acts probably as a transcriptional activator of its corresponding pri-miRNA. In Arabidopsis thaliana (Mouse-ear cress), this protein is Peptide encoded by miPEP164a.